The following is a 516-amino-acid chain: Na(+)/H(+) antiporter NhaB (516 aa).

12 consecutive transmembrane segments (helical) span residues 23 to 43, 61 to 80, 97 to 117, 120 to 140, 144 to 164, 202 to 222, 238 to 258, 303 to 323, 348 to 368, 391 to 411, 447 to 467, and 475 to 495; these read LALI…PFVA, CYPL…IGMT, LLLI…LFVF, LLLG…AAAF, FLDA…FYGI, LMMH…VGEP, FFIR…LTCL, AVIG…VGLI, TEAL…AVII, LFYL…VGTV, ATPN…APLI, and VWMA…CVEF.

This sequence belongs to the NhaB Na(+)/H(+) (TC 2.A.34) antiporter family.

It localises to the cell inner membrane. The enzyme catalyses 2 Na(+)(in) + 3 H(+)(out) = 2 Na(+)(out) + 3 H(+)(in). Its function is as follows. Na(+)/H(+) antiporter that extrudes sodium in exchange for external protons. The protein is Na(+)/H(+) antiporter NhaB of Klebsiella pneumoniae (strain 342).